We begin with the raw amino-acid sequence, 204 residues long: CLAVATA3/ESR (CLE)-related protein 1 (204 aa).

A signal peptide spans 1–21 (MAKNAMLCLLILSVVLALAFA). The tract at residues 21–83 (ATNEKDDKEA…SNQLQNAYRM (63 aa)) is required for secretion from the host cytoplasm to the host apoplasm. N-linked (GlcNAc...) asparagine glycosylation occurs at Asn32. Residues 116–204 (RNTGMKPQSY…TPGVPDRQHR (89 aa)) are disordered. Composition is skewed to basic and acidic residues over residues 139 to 151 (LHNR…EQKR), 160 to 172 (LHNR…EQKR), and 181 to 193 (LHNR…EQKR). 3 consecutive propeptides (removed in mature form) follow at residues 142–150 (REKILEEQK), 163–171 (REKTLEEQK), and 184–192 (REKTLEEQK).

The protein belongs to the CLV3/ESR signal peptide family. Post-translationally, preprocessing of the precursor by host proteases leads first to the production of 21-mer CLE-containing peptides (Arg-130 to Lys-150, Arg-151 to Lys-171 and Arg-172 to Lys-192) followed by an ultimate C-term trimming to give the mature 12-mer CLE1-1 peptide. As to expression, highly expressed exclusively within the dorsal esophageal gland cell during syncytium formation in host plants.

The protein localises to the secreted. It localises to the host cytoplasm. Its subcellular location is the host extracellular space. The protein resides in the extracellular space. It is found in the apoplast. In terms of biological role, mimics host plant CLE extracellular signal peptides that regulate cell fate. May play a role in the differentiation or division of feeding cells (syncytia) induced in plant roots during infection. The sequence is that of CLAVATA3/ESR (CLE)-related protein 1 from Globodera rostochiensis (Golden nematode worm).